Reading from the N-terminus, the 467-residue chain is Cysteine--tRNA ligase (467 aa).

Cys29 contacts Zn(2+). The short motif at 31–41 (PTVYNYIHIGN) is the 'HIGH' region element. Residues Cys209, His234, and Glu238 each coordinate Zn(2+). The short motif at 266-270 (KMSKS) is the 'KMSKS' region element. Residue Lys269 coordinates ATP. The residue at position 270 (Ser270) is a Phosphoserine.

It belongs to the class-I aminoacyl-tRNA synthetase family. Monomer. Zn(2+) serves as cofactor.

It is found in the cytoplasm. It catalyses the reaction tRNA(Cys) + L-cysteine + ATP = L-cysteinyl-tRNA(Cys) + AMP + diphosphate. In Bacillus licheniformis (strain ATCC 14580 / DSM 13 / JCM 2505 / CCUG 7422 / NBRC 12200 / NCIMB 9375 / NCTC 10341 / NRRL NRS-1264 / Gibson 46), this protein is Cysteine--tRNA ligase.